Here is a 134-residue protein sequence, read N- to C-terminus: Small ribosomal subunit protein uS9 (134 aa).

The protein belongs to the universal ribosomal protein uS9 family.

This is Small ribosomal subunit protein uS9 from Pseudothermotoga lettingae (strain ATCC BAA-301 / DSM 14385 / NBRC 107922 / TMO) (Thermotoga lettingae).